The following is a 252-amino-acid chain: 3-dehydroquinate dehydratase (252 aa).

Residues S21, E46–R48, and R82 each bind 3-dehydroquinate. H143 acts as the Proton donor/acceptor in catalysis. K170 acts as the Schiff-base intermediate with substrate in catalysis. Residues R213, S232, and Q236 each contribute to the 3-dehydroquinate site.

Belongs to the type-I 3-dehydroquinase family. As to quaternary structure, homodimer.

It carries out the reaction 3-dehydroquinate = 3-dehydroshikimate + H2O. The protein operates within metabolic intermediate biosynthesis; chorismate biosynthesis; chorismate from D-erythrose 4-phosphate and phosphoenolpyruvate: step 3/7. Involved in the third step of the chorismate pathway, which leads to the biosynthesis of aromatic amino acids. Catalyzes the cis-dehydration of 3-dehydroquinate (DHQ) and introduces the first double bond of the aromatic ring to yield 3-dehydroshikimate. The sequence is that of 3-dehydroquinate dehydratase from Escherichia coli O6:K15:H31 (strain 536 / UPEC).